A 429-amino-acid polypeptide reads, in one-letter code: Enolase (429 aa).

Residue Q163 participates in (2R)-2-phosphoglycerate binding. Catalysis depends on E205, which acts as the Proton donor. Mg(2+) contacts are provided by D242, E285, and D312. Positions 337, 366, 367, and 388 each coordinate (2R)-2-phosphoglycerate. K337 acts as the Proton acceptor in catalysis.

The protein belongs to the enolase family. Mg(2+) serves as cofactor.

It localises to the cytoplasm. The protein localises to the secreted. Its subcellular location is the cell surface. The catalysed reaction is (2R)-2-phosphoglycerate = phosphoenolpyruvate + H2O. It functions in the pathway carbohydrate degradation; glycolysis; pyruvate from D-glyceraldehyde 3-phosphate: step 4/5. Catalyzes the reversible conversion of 2-phosphoglycerate (2-PG) into phosphoenolpyruvate (PEP). It is essential for the degradation of carbohydrates via glycolysis. The polypeptide is Enolase (Oceanobacillus iheyensis (strain DSM 14371 / CIP 107618 / JCM 11309 / KCTC 3954 / HTE831)).